The chain runs to 248 residues: tRNA1(Val) (adenine(37)-N6)-methyltransferase (248 aa).

This sequence belongs to the methyltransferase superfamily. tRNA (adenine-N(6)-)-methyltransferase family.

Its subcellular location is the cytoplasm. The catalysed reaction is adenosine(37) in tRNA1(Val) + S-adenosyl-L-methionine = N(6)-methyladenosine(37) in tRNA1(Val) + S-adenosyl-L-homocysteine + H(+). Specifically methylates the adenine in position 37 of tRNA(1)(Val) (anticodon cmo5UAC). The protein is tRNA1(Val) (adenine(37)-N6)-methyltransferase of Pectobacterium carotovorum subsp. carotovorum (strain PC1).